The sequence spans 251 residues: Uridylate kinase (251 aa).

19 to 22 provides a ligand contact to ATP; that stretch reads KLSG. UMP is bound at residue Gly61. ATP-binding residues include Gly62 and Arg66. UMP is bound by residues Asp81 and 142 to 149; that span reads TGNPYFTT. ATP is bound by residues Thr169, Tyr175, and Asp178.

The protein belongs to the UMP kinase family. In terms of assembly, homohexamer.

Its subcellular location is the cytoplasm. The catalysed reaction is UMP + ATP = UDP + ADP. The protein operates within pyrimidine metabolism; CTP biosynthesis via de novo pathway; UDP from UMP (UMPK route): step 1/1. Its activity is regulated as follows. Inhibited by UTP. Functionally, catalyzes the reversible phosphorylation of UMP to UDP. In Anaeromyxobacter dehalogenans (strain 2CP-C), this protein is Uridylate kinase.